Reading from the N-terminus, the 66-residue chain is Large ribosomal subunit protein uL29 (66 aa).

This sequence belongs to the universal ribosomal protein uL29 family.

This Agrobacterium fabrum (strain C58 / ATCC 33970) (Agrobacterium tumefaciens (strain C58)) protein is Large ribosomal subunit protein uL29.